A 93-amino-acid chain; its full sequence is UPF0473 protein BH1270 (93 aa).

Belongs to the UPF0473 family.

The sequence is that of UPF0473 protein BH1270 from Halalkalibacterium halodurans (strain ATCC BAA-125 / DSM 18197 / FERM 7344 / JCM 9153 / C-125) (Bacillus halodurans).